Reading from the N-terminus, the 81-residue chain is Conotoxin ArMKLT2-01 (81 aa).

Positions 1–19 are cleaved as a signal peptide; that stretch reads MKLTCVIIVVALFLTACHA. The propeptide occupies 20–43; it reads KDKQEHPAVRGSDDMQDSEDLKLA. 3 disulfide bridges follow: C46/C61, C53/C65, and C60/C74.

Belongs to the conotoxin O1 superfamily. Expressed by the venom duct.

The protein localises to the secreted. In Conus arenatus (Sand-dusted cone), this protein is Conotoxin ArMKLT2-01.